Consider the following 1399-residue polypeptide: DNA-directed RNA polymerase subunit beta' (1399 aa).

4 residues coordinate Zn(2+): Cys-70, Cys-72, Cys-85, and Cys-88. Residues Asp-460, Asp-462, and Asp-464 each contribute to the Mg(2+) site. Residues Cys-814, Cys-888, Cys-895, and Cys-898 each coordinate Zn(2+).

It belongs to the RNA polymerase beta' chain family. The RNAP catalytic core consists of 2 alpha, 1 beta, 1 beta' and 1 omega subunit. When a sigma factor is associated with the core the holoenzyme is formed, which can initiate transcription. The cofactor is Mg(2+). Zn(2+) serves as cofactor.

It carries out the reaction RNA(n) + a ribonucleoside 5'-triphosphate = RNA(n+1) + diphosphate. DNA-dependent RNA polymerase catalyzes the transcription of DNA into RNA using the four ribonucleoside triphosphates as substrates. The sequence is that of DNA-directed RNA polymerase subunit beta' from Pseudomonas fluorescens (strain SBW25).